Reading from the N-terminus, the 103-residue chain is N(4)-acetylcytidine amidohydrolase (103 aa).

In terms of domain architecture, ASCH spans 6 to 101 (ITFFQRFQDD…QTQFYVIEFK (96 aa)). The Proton acceptor role is filled by Lys-21. The Nucleophile role is filled by Thr-24. Glu-74 acts as the Proton donor in catalysis.

It belongs to the N(4)-acetylcytidine amidohydrolase family.

The catalysed reaction is N(4)-acetylcytidine + H2O = cytidine + acetate + H(+). It carries out the reaction N(4)-acetyl-2'-deoxycytidine + H2O = 2'-deoxycytidine + acetate + H(+). The enzyme catalyses N(4)-acetylcytosine + H2O = cytosine + acetate + H(+). In terms of biological role, catalyzes the hydrolysis of N(4)-acetylcytidine (ac4C). The protein is N(4)-acetylcytidine amidohydrolase (yqfB) of Escherichia coli O8 (strain IAI1).